Reading from the N-terminus, the 285-residue chain is 1,4-dihydroxy-2-naphthoyl-CoA synthase (285 aa).

Substrate is bound by residues Arg-45, 84 to 89, Tyr-97, 129 to 133, Thr-155, Ser-161, Tyr-258, and Lys-273; these read SGGDQK and YSIGG. Residue 154–156 participates in hydrogencarbonate binding; sequence QTG.

Belongs to the enoyl-CoA hydratase/isomerase family. MenB subfamily. In terms of assembly, homohexamer. Dimer of a homotrimer. Hydrogencarbonate serves as cofactor.

It carries out the reaction 2-succinylbenzoyl-CoA + H(+) = 1,4-dihydroxy-2-naphthoyl-CoA + H2O. It participates in quinol/quinone metabolism; 1,4-dihydroxy-2-naphthoate biosynthesis; 1,4-dihydroxy-2-naphthoate from chorismate: step 6/7. The protein operates within quinol/quinone metabolism; menaquinone biosynthesis. With respect to regulation, inhibited by sulfite and nitrate. In terms of biological role, converts o-succinylbenzoyl-CoA (OSB-CoA) to 1,4-dihydroxy-2-naphthoyl-CoA (DHNA-CoA). The protein is 1,4-dihydroxy-2-naphthoyl-CoA synthase of Escherichia coli (strain K12).